Consider the following 1385-residue polypeptide: DNA-directed RNA polymerase subunit beta' (1385 aa).

Zn(2+) contacts are provided by cysteine 72, cysteine 74, cysteine 87, and cysteine 90. The Mg(2+) site is built by aspartate 467, aspartate 469, and aspartate 471. The Zn(2+) site is built by cysteine 829, cysteine 910, cysteine 917, and cysteine 920.

Belongs to the RNA polymerase beta' chain family. The RNAP catalytic core consists of 2 alpha, 1 beta, 1 beta' and 1 omega subunit. When a sigma factor is associated with the core the holoenzyme is formed, which can initiate transcription. It depends on Mg(2+) as a cofactor. Zn(2+) serves as cofactor.

The enzyme catalyses RNA(n) + a ribonucleoside 5'-triphosphate = RNA(n+1) + diphosphate. DNA-dependent RNA polymerase catalyzes the transcription of DNA into RNA using the four ribonucleoside triphosphates as substrates. The protein is DNA-directed RNA polymerase subunit beta' of Elusimicrobium minutum (strain Pei191).